The sequence spans 222 residues: Probable RNA 2'-phosphotransferase (222 aa).

This sequence belongs to the KptA/TPT1 family.

Functionally, removes the 2'-phosphate from RNA via an intermediate in which the phosphate is ADP-ribosylated by NAD followed by a presumed transesterification to release the RNA and generate ADP-ribose 1''-2''-cyclic phosphate (APPR&gt;P). May function as an ADP-ribosylase. This Haloarcula marismortui (strain ATCC 43049 / DSM 3752 / JCM 8966 / VKM B-1809) (Halobacterium marismortui) protein is Probable RNA 2'-phosphotransferase.